A 432-amino-acid polypeptide reads, in one-letter code: Asparagine--tRNA ligase (432 aa).

Belongs to the class-II aminoacyl-tRNA synthetase family. Homodimer.

The protein localises to the cytoplasm. It catalyses the reaction tRNA(Asn) + L-asparagine + ATP = L-asparaginyl-tRNA(Asn) + AMP + diphosphate + H(+). The chain is Asparagine--tRNA ligase from Lactobacillus johnsonii (strain CNCM I-12250 / La1 / NCC 533).